A 458-amino-acid chain; its full sequence is Bifunctional protein GlmU (458 aa).

The pyrophosphorylase stretch occupies residues M1–R229. UDP-N-acetyl-alpha-D-glucosamine-binding positions include L8–G11, K22, Q72, and G77–T78. Residue D102 participates in Mg(2+) binding. G139, E154, N169, and N227 together coordinate UDP-N-acetyl-alpha-D-glucosamine. N227 is a Mg(2+) binding site. Residues V230–N250 form a linker region. Residues G251–Q458 form an N-acetyltransferase region. The UDP-N-acetyl-alpha-D-glucosamine site is built by R332 and K350. H362 functions as the Proton acceptor in the catalytic mechanism. UDP-N-acetyl-alpha-D-glucosamine-binding residues include Y365 and N376. Residues A379, S404, A422, and R439 each coordinate acetyl-CoA.

In the N-terminal section; belongs to the N-acetylglucosamine-1-phosphate uridyltransferase family. The protein in the C-terminal section; belongs to the transferase hexapeptide repeat family. As to quaternary structure, homotrimer. It depends on Mg(2+) as a cofactor.

It is found in the cytoplasm. It catalyses the reaction alpha-D-glucosamine 1-phosphate + acetyl-CoA = N-acetyl-alpha-D-glucosamine 1-phosphate + CoA + H(+). The catalysed reaction is N-acetyl-alpha-D-glucosamine 1-phosphate + UTP + H(+) = UDP-N-acetyl-alpha-D-glucosamine + diphosphate. Its pathway is nucleotide-sugar biosynthesis; UDP-N-acetyl-alpha-D-glucosamine biosynthesis; N-acetyl-alpha-D-glucosamine 1-phosphate from alpha-D-glucosamine 6-phosphate (route II): step 2/2. It functions in the pathway nucleotide-sugar biosynthesis; UDP-N-acetyl-alpha-D-glucosamine biosynthesis; UDP-N-acetyl-alpha-D-glucosamine from N-acetyl-alpha-D-glucosamine 1-phosphate: step 1/1. The protein operates within bacterial outer membrane biogenesis; LPS lipid A biosynthesis. Its function is as follows. Catalyzes the last two sequential reactions in the de novo biosynthetic pathway for UDP-N-acetylglucosamine (UDP-GlcNAc). The C-terminal domain catalyzes the transfer of acetyl group from acetyl coenzyme A to glucosamine-1-phosphate (GlcN-1-P) to produce N-acetylglucosamine-1-phosphate (GlcNAc-1-P), which is converted into UDP-GlcNAc by the transfer of uridine 5-monophosphate (from uridine 5-triphosphate), a reaction catalyzed by the N-terminal domain. The chain is Bifunctional protein GlmU from Lactococcus lactis subsp. cremoris (strain MG1363).